The chain runs to 607 residues: Chaperone protein DnaK (607 aa).

At threonine 174 the chain carries Phosphothreonine; by autocatalysis. Residues 571-607 form a disordered region; that stretch reads AAMYQKQAQQQQPGPGPDAGKDKDDKDKTVDADYEVK. Positions 589–607 are enriched in basic and acidic residues; sequence AGKDKDDKDKTVDADYEVK.

The protein belongs to the heat shock protein 70 family.

Acts as a chaperone. The chain is Chaperone protein DnaK from Desulforudis audaxviator (strain MP104C).